The following is a 213-amino-acid chain: Ribosomal RNA large subunit methyltransferase E (213 aa).

Residues Gly68, Trp70, Asp88, Asp104, and Asp127 each contribute to the S-adenosyl-L-methionine site. Lys167 (proton acceptor) is an active-site residue.

Belongs to the class I-like SAM-binding methyltransferase superfamily. RNA methyltransferase RlmE family.

Its subcellular location is the cytoplasm. It carries out the reaction uridine(2552) in 23S rRNA + S-adenosyl-L-methionine = 2'-O-methyluridine(2552) in 23S rRNA + S-adenosyl-L-homocysteine + H(+). In terms of biological role, specifically methylates the uridine in position 2552 of 23S rRNA at the 2'-O position of the ribose in the fully assembled 50S ribosomal subunit. The protein is Ribosomal RNA large subunit methyltransferase E of Neorickettsia sennetsu (strain ATCC VR-367 / Miyayama) (Ehrlichia sennetsu).